A 478-amino-acid polypeptide reads, in one-letter code: JmjC domain-containing histone demethylation protein 1 (478 aa).

The segment at 6 to 70 (VKCHFCKKDD…HVESFKCTLH (65 aa)) adopts a PHD-type zinc-finger fold. The region spanning 242–401 (SHVESFKDGI…TQLNVVEIEH (160 aa)) is the JmjC domain. Substrate is bound at residue threonine 294. Residues histidine 297 and aspartate 299 each contribute to the Fe cation site. Lysine 314 contacts substrate. A Fe cation-binding site is contributed by histidine 369.

The protein belongs to the JHDM1 histone demethylase family. Requires Fe(2+) as cofactor.

Its subcellular location is the nucleus. The catalysed reaction is N(6),N(6)-dimethyl-L-lysyl(36)-[histone H3] + 2 2-oxoglutarate + 2 O2 = L-lysyl(36)-[histone H3] + 2 formaldehyde + 2 succinate + 2 CO2. Functionally, histone demethylase that specifically demethylates 'Lys-36' of histone H3, thereby playing a central role in histone code. The sequence is that of JmjC domain-containing histone demethylation protein 1 (JHD1) from Kluyveromyces lactis (strain ATCC 8585 / CBS 2359 / DSM 70799 / NBRC 1267 / NRRL Y-1140 / WM37) (Yeast).